Consider the following 418-residue polypeptide: MVRTFAVTALALLPLVAAQQIGSTKEVHPQLTTYKCTSQGGCVKQNTSIVLDSGSHWIHAKGGEVSCTTSSGLDPALCPDKETCAENCVVEGITDYSQYGVQTRGDAMLLREYIKQNNQTKAPSPRVYLLDEDGENYSMLRLLNQEFTFDVDVSKLPCGMNGALYFSEMSASGGRSALNPAGAAYGTGYCDAQCYTNAWINGEANTAKAGLCCQEMDIWEANARANAFTPHPCNSTGLLGCAGDECNSVCDKAGCGFNPYALGARDYYGTAMTVDTTKPFTVVTQFLTADNSTTGALREIRRLYVQAGQVIQNAVVKVDGRTVNSITEPYCASQGVFEGLGGLRRMGEALGRGMVLSMSIWNDAGGFMHWLDSGNSGPCSSTEGDPSLIENKYPDTAVTFSKIRWGDLGTTFATRRLH.

The first 18 residues, 1–18, serve as a signal peptide directing secretion; the sequence is MVRTFAVTALALLPLVAA. N-linked (GlcNAc...) asparagine glycosylation is found at N46, N118, and N136. The active-site Nucleophile is the E215. The Proton donor role is filled by E220. N-linked (GlcNAc...) asparagine glycosylation is found at N234 and N291.

The protein belongs to the glycosyl hydrolase 7 (cellulase C) family.

It localises to the secreted. The catalysed reaction is Endohydrolysis of (1-&gt;4)-beta-D-glucosidic linkages in cellulose, lichenin and cereal beta-D-glucans.. Its function is as follows. Has endoglucanase activity on substrates containing beta-1,4 glycosidic bonds, like in carboxymethylcellulose (CMC), hydroxyethylcellulose (HEC) and beta-glucan. Involved in the degradation of complex natural cellulosic substrates. In Aspergillus clavatus (strain ATCC 1007 / CBS 513.65 / DSM 816 / NCTC 3887 / NRRL 1 / QM 1276 / 107), this protein is Probable endo-beta-1,4-glucanase celB (celB).